We begin with the raw amino-acid sequence, 475 residues long: MSNCELTVLKPAEVKLSPRDREGIINPMYDCQPAGAQYAGIGIKDCIPLVHGGQGCTMFVRLLFAQHFKENFDVASTSLHEESAVFGGAKRVEEGVLVLARRYPNLRVIPIITTCSTEVIGDDIEGSIRVCNRALEAEFPDRKIYLAPVHTPSFKGSHVTGYAECVKSVFKTITDAHGKGQPSGKLNVFPGWVNPGDVVLLKRYFKEMDVEANIYMDTEDFDSPMLPNKSIETHGRTTVEDIADSANALATLSLARYEGNTTGELLQKTFAVPNALVNTPYGIKNTDDMLRKIAEVTGKEIPESLVRERGIALDALADLAHMFFANKKVAIFGHPDLVLGLAQFCMEVELEPVLLLIGDDQGNKYKKDPRIEELKNTAHFDIEIVHNADLWELEKRINAGLQLDLIMGHSKGRYVAIEANIPMVRVGFPTFDRAGLYRKPSIGYQGAMELGEMIANAMFAHMEYTRNKEWILNTW.

Residues Cys-31, Cys-56, Cys-115, and Ser-153 each contribute to the [8Fe-7S] cluster site.

Belongs to the NifD/NifK/NifE/NifN family. As to quaternary structure, hexamer of two alpha, two beta, and two delta chains. Requires [8Fe-7S] cluster as cofactor.

It carries out the reaction N2 + 8 reduced [2Fe-2S]-[ferredoxin] + 16 ATP + 16 H2O = H2 + 8 oxidized [2Fe-2S]-[ferredoxin] + 2 NH4(+) + 16 ADP + 16 phosphate + 6 H(+). Its function is as follows. This vanadium-iron protein is part of the nitrogenase complex that catalyzes the key enzymatic reactions in nitrogen fixation. The polypeptide is Nitrogenase vanadium-iron protein beta chain (vnfK) (Azotobacter vinelandii).